The primary structure comprises 423 residues: Keratin, type I cytoskeletal 18 (423 aa).

The residue at position 2 (Ser2) is an N-acetylserine. The interval 2-71 is head; sequence SFTTRSTTFS…GLAGMGGVQT (70 aa). Phosphoserine occurs at positions 7, 11, 16, and 19. Phosphoserine; alternate is present on residues Ser31 and Ser32. Residues Ser31 and Ser32 are each glycosylated (O-linked (GlcNAc) serine; alternate). Ser35 carries the phosphoserine modification. Position 37 is a phosphotyrosine (Tyr37). The residue at position 43 (Ser43) is a Phosphoserine. Omega-N-methylarginine is present on Arg46. Ser50 carries the phosphoserine; alternate modification. Ser50 is a glycosylation site (O-linked (GlcNAc) serine; alternate). Ser52 carries the post-translational modification Phosphoserine; by MAPKAPK2 and MAPKAPK3. Ser57 and Ser60 each carry phosphoserine. Residues 62–366 form a necessary for interaction with PNN region; sequence GLAGMGGVQT…EALLNIKVKL (305 aa). The interaction with TRADD stretch occupies residues 69–121; the sequence is VQTEKETMQDLNDRLASYLDKVKNLETENRRLESKIREYLEKRGPQGVRDWGH. Residues 72–107 are coil 1A; that stretch reads EKETMQDLNDRLASYLDKVKNLETENRRLESKIREY. The 313-residue stretch at 72–384 folds into the IF rod domain; the sequence is EKETMQDLND…RLLEDGDDFS (313 aa). Residue Lys73 forms a Glycyl lysine isopeptide (Lys-Gly) (interchain with G-Cter in SUMO2) linkage. Ser85 carries the phosphoserine modification. The tract at residues 108–125 is linker 1; the sequence is LEKRGPQGVRDWGHYFKT. At Lys124 the chain carries N6-acetyllysine. The interval 126–217 is coil 1B; that stretch reads IEDLRAQIFA…KNHEEEVQGL (92 aa). 2 positions are modified to phosphoserine: Ser137 and Ser170. A linker 12 region spans residues 218-241; the sequence is EAQIASSGLTVEVDAPKSQDLSKI. An interaction with DNAJB6 region spans residues 236 to 384; sequence QDLSKIMADI…RLLEDGDDFS (149 aa). Residue Lys240 forms a Glycyl lysine isopeptide (Lys-Gly) (interchain with G-Cter in SUMO2) linkage. Residues 242–380 form a coil 2 region; the sequence is MADIRAQYEQ…ATYRRLLEDG (139 aa). Phosphothreonine is present on Thr295. Glycyl lysine isopeptide (Lys-Gly) (interchain with G-Cter in SUMO2) cross-links involve residues Lys363 and Lys365. The segment at 381–423 is tail; sequence DDFSLNDALDSSNSMQTVQRTTTRKVVDGKVVSETNDTRVLRH. Ser384, Ser391, Ser392, and Ser394 each carry phosphoserine. Thr397 is subject to Phosphothreonine. Residue Lys410 forms a Glycyl lysine isopeptide (Lys-Gly) (interchain with G-Cter in SUMO2) linkage.

Belongs to the intermediate filament family. As to quaternary structure, heterotetramer of two type I and two type II keratins. KRT18 associates with KRT8. Interacts with PNN and mutated CFTR. Interacts with YWHAE, YWHAH and YWHAZ only when phosphorylated. Interacts with DNAJB6, TCHP and TRADD. Interacts with the thrombin-antithrombin complex. Interacts with FAM83H. Interacts with EPPK1. Interacts with PKP1 and PKP2. Phosphorylation increases by IL-6. Post-translationally, proteolytically cleaved by caspases during epithelial cell apoptosis. Cleavage occurs at Asp-231 by either caspase-3, caspase-6 or caspase-7. In terms of processing, dephosphorylated by ethanol. O-GlcNAcylation increases solubility, and decreases stability by inducing proteasomal degradation. As to expression, expressed on the plasma membrane of hepatocytes and in the narrow apical portions of supporting cells in the vomeronasal sensory epithelium. Detected in the type III alveolar cells of the lung, in the proliferative crypt epithelium of the small intestine and in the older intragemmal cells of the tongue.

The protein resides in the nucleus matrix. The protein localises to the cytoplasm. It localises to the perinuclear region. It is found in the nucleus. Its subcellular location is the nucleolus. Functionally, when phosphorylated, plays a role in filament reorganization. Involved in the delivery of mutated CFTR to the plasma membrane. Together with KRT8, is involved in interleukin-6 (IL-6)-mediated barrier protection. Involved in the uptake of thrombin-antithrombin complexes by hepatic cells. This chain is Keratin, type I cytoskeletal 18, found in Rattus norvegicus (Rat).